The primary structure comprises 478 residues: Adenosylhomocysteinase (478 aa).

Substrate-binding residues include Thr-67, Asp-144, and Glu-204. 205 to 207 is an NAD(+) binding site; that stretch reads TTT. Substrate contacts are provided by Lys-234 and Asp-238. NAD(+)-binding positions include Asn-239, 268-273, Glu-291, Asn-326, 347-349, and Asn-392; these read GYGDVG and IGH.

The protein belongs to the adenosylhomocysteinase family. Requires NAD(+) as cofactor.

The protein resides in the cytoplasm. The catalysed reaction is S-adenosyl-L-homocysteine + H2O = L-homocysteine + adenosine. The protein operates within amino-acid biosynthesis; L-homocysteine biosynthesis; L-homocysteine from S-adenosyl-L-homocysteine: step 1/1. Its function is as follows. May play a key role in the regulation of the intracellular concentration of adenosylhomocysteine. This is Adenosylhomocysteinase from Nitrosomonas eutropha (strain DSM 101675 / C91 / Nm57).